We begin with the raw amino-acid sequence, 217 residues long: Probable GTP-binding protein EngB (217 aa).

Positions 44-217 (DRVEVCFAGR…TLRSIIAHLE (174 aa)) constitute an EngB-type G domain. GTP-binding positions include 52 to 59 (GRSNVGKS), 79 to 83 (GRTQE), 97 to 100 (DLPG), 164 to 167 (TKAD), and 198 to 200 (TSS). Residues Ser59 and Thr81 each coordinate Mg(2+).

Belongs to the TRAFAC class TrmE-Era-EngA-EngB-Septin-like GTPase superfamily. EngB GTPase family. The cofactor is Mg(2+).

Functionally, necessary for normal cell division and for the maintenance of normal septation. This chain is Probable GTP-binding protein EngB, found in Ruegeria pomeroyi (strain ATCC 700808 / DSM 15171 / DSS-3) (Silicibacter pomeroyi).